Consider the following 263-residue polypeptide: Ycf3-interacting protein 1, chloroplastic (263 aa).

A chloroplast-targeting transit peptide spans 1-71 (MASNMLQLSL…VNKEEDSATY (71 aa)). The chain crosses the membrane as a helical span at residues 238–258 (ALYLVSAFPIIIGISVVLILF).

This sequence belongs to the Y3IP1/CEST family. As to quaternary structure, interacts with Ycf3.

Its subcellular location is the plastid. The protein localises to the chloroplast thylakoid membrane. Functionally, nuclear genome-encoded factor that participates in photosystem I (PSI) biogenesis. Cooperates with the plastid genome-encoded protein PSI assembly Ycf3 in the assembly of stable PSI units in the thylakoid membrane. This is Ycf3-interacting protein 1, chloroplastic from Nicotiana tabacum (Common tobacco).